Reading from the N-terminus, the 226-residue chain is Large ribosomal subunit protein uL1 (226 aa).

It belongs to the universal ribosomal protein uL1 family. Part of the 50S ribosomal subunit.

Functionally, binds directly to 23S rRNA. Probably involved in E site tRNA release. Protein L1 is also a translational repressor protein, it controls the translation of its operon by binding to its mRNA. In Korarchaeum cryptofilum (strain OPF8), this protein is Large ribosomal subunit protein uL1.